Here is a 972-residue protein sequence, read N- to C-terminus: FHF complex subunit HOOK-interacting protein 1B (972 aa).

Disordered regions lie at residues 465 to 496 (APSP…VPRP), 510 to 547 (SLSG…AGEL), 573 to 642 (SAPY…PGSW), and 710 to 733 (SFTC…NQLP). Ser-467 carries the phosphoserine modification. Over residues 479–490 (GPGSPSVDSSSV) the composition is skewed to low complexity. A phosphoserine mark is found at Ser-510, Ser-523, Ser-529, and Ser-533. Residues 523 to 535 (SPGLSASPASSPG) show a composition bias toward low complexity. Residues 618-627 (GLAGGAGEGP) are compositionally biased toward gly residues. A phosphoserine mark is found at Ser-859 and Ser-897.

This sequence belongs to the FHIP family. In terms of assembly, component of the FTS/Hook/FHIP complex (FHF complex), composed of AKTIP/FTS, FHIP1B, and one or more members of the Hook family of proteins HOOK1, HOOK2, and HOOK3. The FHF complex associates with the homotypic vesicular sorting complex (the HOPS complex).

Functionally, component of the FTS/Hook/FHIP complex (FHF complex). The FHF complex may function to promote vesicle trafficking and/or fusion via the homotypic vesicular protein sorting complex (the HOPS complex). FHF complex promotes the distribution of AP-4 complex to the perinuclear area of the cell. This Pongo abelii (Sumatran orangutan) protein is FHF complex subunit HOOK-interacting protein 1B (FHIP1B).